A 117-amino-acid chain; its full sequence is Antimicrobial peptide AmAMP1 (117 aa).

Residues 1-25 form the signal peptide; it reads MPSIRVLFVLLAVILLFMEVKMTSA. Positions 26 to 73 are excised as a propeptide; the sequence is ASIVKDVDEDETLENEDGEAMENSWPWHGVEDTSDYSDLSDLANSEKR. Cystine bridges form between Cys-76-Cys-115, Cys-85-Cys-108, and Cys-94-Cys-112.

This sequence belongs to the coral AMP family.

It localises to the secreted. In terms of biological role, coral peptide that probably acts as an antimicrobial peptide in the surface mucous layer of planula larvae and likely also in adults. Shows moderate to high activity against some Gram-negative and Gram-positive bacteria (tested on E.coli, B.megaterium, S.aureus, E.aesturaii, B.algicola, Acinetobacter spec.). Does not show antibacterial activity against the coral pathogen V.coralliilyticus. This Acropora millepora (Staghorn coral) protein is Antimicrobial peptide AmAMP1.